Reading from the N-terminus, the 268-residue chain is Phosphate import ATP-binding protein PstB 2 (268 aa).

Positions 19 to 263 constitute an ABC transporter domain; sequence YKVRNMAFFY…PKDKRTEDYI (245 aa). Residue 51 to 58 coordinates ATP; it reads GPSGCGKS.

This sequence belongs to the ABC transporter superfamily. Phosphate importer (TC 3.A.1.7) family. As to quaternary structure, the complex is composed of two ATP-binding proteins (PstB), two transmembrane proteins (PstC and PstA) and a solute-binding protein (PstS).

The protein resides in the cell inner membrane. It catalyses the reaction phosphate(out) + ATP + H2O = ADP + 2 phosphate(in) + H(+). Functionally, part of the ABC transporter complex PstSACB involved in phosphate import. Responsible for energy coupling to the transport system. This Gloeobacter violaceus (strain ATCC 29082 / PCC 7421) protein is Phosphate import ATP-binding protein PstB 2.